The following is an 80-amino-acid chain: Exodeoxyribonuclease 7 small subunit (80 aa).

It belongs to the XseB family. Heterooligomer composed of large and small subunits.

It is found in the cytoplasm. The catalysed reaction is Exonucleolytic cleavage in either 5'- to 3'- or 3'- to 5'-direction to yield nucleoside 5'-phosphates.. Functionally, bidirectionally degrades single-stranded DNA into large acid-insoluble oligonucleotides, which are then degraded further into small acid-soluble oligonucleotides. This is Exodeoxyribonuclease 7 small subunit from Rickettsia typhi (strain ATCC VR-144 / Wilmington).